The chain runs to 378 residues: GDP-mannose 3,5-epimerase 1 (378 aa).

NAD(+)-binding positions include 36 to 62 (GAGGFIGSHIARRLKSEGHYIIASDWK), aspartate 60, and aspartate 80. Residues glycine 105 and 145–147 (SAC) each bind substrate. NAD(+) contacts are provided by tyrosine 175 and lysine 179. Residue tyrosine 175 is the Proton acceptor of the active site. Substrate-binding positions include asparagine 204, 217–219 (EKA), lysine 226, 242–244 (QTR), arginine 307, and serine 357.

The protein belongs to the NAD(P)-dependent epimerase/dehydratase family. As to quaternary structure, homodimer. It depends on NAD(+) as a cofactor.

The catalysed reaction is GDP-alpha-D-mannose = GDP-beta-L-gulose. The enzyme catalyses GDP-beta-L-gulose = GDP-beta-L-galactose. It participates in cofactor biosynthesis; L-ascorbate biosynthesis via GDP-alpha-D-mannose pathway; L-ascorbate from GDP-alpha-D-mannose: step 1/5. Strongly activated by NAD. Activated by NADP. Slightly activated by NADH and NADPH. Inhibited by GDP. In terms of biological role, catalyzes a reversible epimerization of GDP-D-mannose that precedes the committed step in the biosynthesis of vitamin C (L-ascorbate), resulting in the hydrolysis of the highly energetic glycosyl-pyrophosphoryl linkage. Able to catalyze 2 distinct epimerization reactions and can release both GDP-L-galactose and GDP-L-gulose from GDP-mannose. The protein is GDP-mannose 3,5-epimerase 1 (GME-1) of Oryza sativa subsp. japonica (Rice).